The primary structure comprises 344 residues: MGGSILLGIFWHFVGATSAACFYAPMKKVTNWSWETMWAIAGIFSWILLPWGISYWLLPDFGSYYSFFGSDILLPVFLFGAMWGIGNIGYGLTMRYLGMSMGIGIAIGITLIVGTLMTPIIQGRFGELLASTGGQMTLIGVVIAVVGVAVVSYAGLLKEKAIGVTAEEFNLKKGLALAVMCGIFSAGMSFAMSAATPMHEEAARLGVDPLYVALPSYVVIMGGGAIINLGFCIIRLITRPELSFKADMSVVKGLLISNILFSALGGIMWYFQFFFYAWGHANIPANYGFMSWMLHMSFYVLCGGIVGLLLHEWKDTGKKPTRVLCIGCLIIVLAANIVGLGMAN.

The next 10 helical transmembrane spans lie at 5–25, 38–58, 72–92, 101–121, 137–157, 175–195, 214–234, 259–279, 289–309, and 323–343; these read ILLG…FYAP, WAIA…YWLL, ILLP…GYGL, MGIG…TPII, TLIG…AGLL, LALA…MSAA, LPSY…FCII, ILFS…YAWG, FMSW…VGLL, and VLCI…LGMA.

Belongs to the L-rhamnose transporter (TC 2.A.7.6) family.

The protein localises to the cell inner membrane. It catalyses the reaction L-rhamnopyranose(in) + H(+)(in) = L-rhamnopyranose(out) + H(+)(out). In terms of biological role, uptake of L-rhamnose across the cytoplasmic membrane with the concomitant transport of protons into the cell (symport system). This chain is L-rhamnose-proton symporter, found in Mannheimia succiniciproducens (strain KCTC 0769BP / MBEL55E).